The following is a 449-amino-acid chain: Cryptochrome DASH (449 aa).

A Photolyase/cryptochrome alpha/beta domain is found at 15-147 (RLGLFVFRND…PFHETPNNTL (133 aa)).

The protein belongs to the DNA photolyase class-1 family. FAD serves as cofactor. (6R)-5,10-methylene-5,6,7,8-tetrahydrofolate is required as a cofactor.

Its function is as follows. May have a photoreceptor function. Binds DNA; probably functions as a transcriptional repressor. The protein is Cryptochrome DASH (cry) of Idiomarina loihiensis (strain ATCC BAA-735 / DSM 15497 / L2-TR).